The chain runs to 40 residues: Protein 4.1 (40 aa).

The sequence is that of Protein 4.1 from Escherichia phage T7 (Bacteriophage T7).